Consider the following 314-residue polypeptide: Aspartate carbamoyltransferase catalytic subunit (314 aa).

Residues Arg-53 and Thr-54 each contribute to the carbamoyl phosphate site. Residue Lys-82 participates in L-aspartate binding. Positions 103, 131, and 134 each coordinate carbamoyl phosphate. Arg-164 and Arg-230 together coordinate L-aspartate. 2 residues coordinate carbamoyl phosphate: Leu-267 and Pro-268.

This sequence belongs to the aspartate/ornithine carbamoyltransferase superfamily. ATCase family. Heterooligomer of catalytic and regulatory chains.

It catalyses the reaction carbamoyl phosphate + L-aspartate = N-carbamoyl-L-aspartate + phosphate + H(+). The protein operates within pyrimidine metabolism; UMP biosynthesis via de novo pathway; (S)-dihydroorotate from bicarbonate: step 2/3. Functionally, catalyzes the condensation of carbamoyl phosphate and aspartate to form carbamoyl aspartate and inorganic phosphate, the committed step in the de novo pyrimidine nucleotide biosynthesis pathway. The protein is Aspartate carbamoyltransferase catalytic subunit of Methanococcus aeolicus (strain ATCC BAA-1280 / DSM 17508 / OCM 812 / Nankai-3).